Reading from the N-terminus, the 159-residue chain is Endoribonuclease YbeY (159 aa).

Residues His114, His118, and His124 each coordinate Zn(2+).

Belongs to the endoribonuclease YbeY family. Zn(2+) is required as a cofactor.

It is found in the cytoplasm. Functionally, single strand-specific metallo-endoribonuclease involved in late-stage 70S ribosome quality control and in maturation of the 3' terminus of the 16S rRNA. The sequence is that of Endoribonuclease YbeY from Pectobacterium atrosepticum (strain SCRI 1043 / ATCC BAA-672) (Erwinia carotovora subsp. atroseptica).